Here is a 743-residue protein sequence, read N- to C-terminus: Acetyl-coenzyme A synthetase, chloroplastic/glyoxysomal (743 aa).

Residues 1–84 constitute a chloroplast transit peptide; that stretch reads MKIGSPSSPI…LNAVVLGESL (84 aa). The active site involves Asp-613.

It belongs to the ATP-dependent AMP-binding enzyme family. In terms of tissue distribution, expressed in leaves, flower buds and young flowers.

It localises to the plastid. Its subcellular location is the chloroplast. The protein localises to the glyoxysome. It catalyses the reaction acetate + ATP + CoA = acetyl-CoA + AMP + diphosphate. Catalyzes the production of acetyl-CoA, an activated form of acetate that can be used for lipid synthesis or for energy generation. May play a limited role in the biosynthesis of lipids. This Arabidopsis thaliana (Mouse-ear cress) protein is Acetyl-coenzyme A synthetase, chloroplastic/glyoxysomal (ACS).